The chain runs to 293 residues: MAITASMVKELREKTGAGMMDCKKALTETNGDMDKAIDYLREKGIAKAAKKADRVAAEGLAYVKAEGNHAIIVEVNSETDFVAKNENFQKLVAELASHLLEKRPASVEEALEQPFNGGETVQEYINSAIAKIGEKLSLRRFEIVEKEDGDVFGQYIHMGGRIGVLSVIGQSSDEELAKDIAMHVAAINPTYVTRDQVSEDEVAREREVLKQQALNEGKPENIVEKMVEGRLGKYFEQVCLLDQAFVKDGDQKVGKYVQSKGATVKEFIRYEVGEGLEKREDNFAEEVMSQVKK.

The segment at 79–82 (TDFV) is involved in Mg(2+) ion dislocation from EF-Tu.

This sequence belongs to the EF-Ts family.

The protein resides in the cytoplasm. Its function is as follows. Associates with the EF-Tu.GDP complex and induces the exchange of GDP to GTP. It remains bound to the aminoacyl-tRNA.EF-Tu.GTP complex up to the GTP hydrolysis stage on the ribosome. The protein is Elongation factor Ts (tsf) of Halalkalibacterium halodurans (strain ATCC BAA-125 / DSM 18197 / FERM 7344 / JCM 9153 / C-125) (Bacillus halodurans).